The sequence spans 208 residues: Dephospho-CoA kinase (208 aa).

Residues 11-207 enclose the DPCK domain; that stretch reads VIGLTGGIAS…EYYLELAQHD (197 aa). ATP is bound at residue 19 to 24; that stretch reads ASGKSA.

The protein belongs to the CoaE family.

The protein resides in the cytoplasm. The enzyme catalyses 3'-dephospho-CoA + ATP = ADP + CoA + H(+). The protein operates within cofactor biosynthesis; coenzyme A biosynthesis; CoA from (R)-pantothenate: step 5/5. Catalyzes the phosphorylation of the 3'-hydroxyl group of dephosphocoenzyme A to form coenzyme A. This Hahella chejuensis (strain KCTC 2396) protein is Dephospho-CoA kinase.